A 462-amino-acid chain; its full sequence is Coagulation factor IX (462 aa).

The first 21 residues, 1 to 21 (MADAPGLIPIFLLGYLLSTEC), serve as a signal peptide directing secretion. A propeptide spanning residues 22–39 (AVFLDRENATKILTRPKR) is cleaved from the precursor. Tyr40, Asn41, Glu46, Glu47, Glu54, Glu56, Glu59, Glu60, Glu65, Glu66, and Glu69 together coordinate Ca(2+). One can recognise a Gla domain in the interval 40–86 (YNSGKLEEFVQGNLERECIEERCSFEEAREVFENTEKTTEFWKQYVD). Residues Glu46, Glu47, Glu54, Glu56, Glu59, Glu60, Glu65, Glu66, Glu69, Glu72, and Glu75 each carry the 4-carboxyglutamate modification. Glu54 is a Mg(2+) binding site. Cys57 and Cys62 are joined by a disulfide. Glu59 provides a ligand contact to Mg(2+). Glu65 provides a ligand contact to Mg(2+). A Mg(2+)-binding site is contributed by Glu69. Ca(2+) is bound at residue Glu75. A Mg(2+)-binding site is contributed by Glu75. The O-linked (GalNAc...) threonine glycan is linked to Thr78. Residues Glu79, Asp86, Gly87, and Gln89 each coordinate Ca(2+). 4-carboxyglutamate is present on Glu79. Glu79 provides a ligand contact to Mg(2+). An EGF-like; calcium-binding domain is found at 86 to 122 (DGDQCESNPCLNGGICKDDINSYECWCQAGFEGRNCE). Cystine bridges form between Cys90/Cys101, Cys95/Cys110, Cys112/Cys121, Cys127/Cys138, Cys134/Cys148, Cys150/Cys163, Cys171/Cys336, Cys253/Cys269, Cys383/Cys397, and Cys408/Cys436. Ser92 carries an O-linked (Glc...) serine glycan. Positions 103 and 104 each coordinate Ca(2+). Asp103 bears the (3R)-3-hydroxyaspartate mark. Ser107 carries the phosphoserine modification. A propeptide spans 186-227 (AETVFSNTDYGNSTELILDDITNSTILDNLTENSEPINDFTR) (activation peptide). Tyr195 is subject to Sulfotyrosine. Ser198 bears the Phosphoserine mark. Thr199 is modified (phosphothreonine; alternate). Thr199 carries an O-linked (GalNAc...) threonine; alternate glycan. N-linked (GlcNAc...) asparagine glycans are attached at residues Asn208 and Asn214. Residues Thr216 and Thr226 are each glycosylated (O-linked (GalNAc...) threonine). The Peptidase S1 domain maps to 228–460 (VVGGENAKPG…YVNWIKEKTK (233 aa)). His268 (charge relay system) is an active-site residue. Residues Glu282, Asn284, Glu287, Glu289, and Glu292 each coordinate Ca(2+). An N-linked (GlcNAc...) asparagine glycan is attached at Asn307. Residue Asp316 is the Charge relay system of the active site. The active-site Charge relay system is the Ser412.

Belongs to the peptidase S1 family. As to quaternary structure, heterodimer of a light chain and a heavy chain; disulfide-linked. Interacts (inactive and activated) with F11 (activated) in calcium-dependent manner. Interacts with SERPINC1. Interacts (inactive and activated) with nitrophorin-2, an anticoagulant protein from Rhodnius prolixus. Post-translationally, activated by factor XIa, which excises the activation peptide. The propeptide can also be removed by snake venom protease. Activated by coagulation factor VIIa-tissue factor (F7-F3) complex in calcium-dependent manner. The iron and 2-oxoglutarate dependent 3-hydroxylation of aspartate and asparagine is (R) stereospecific within EGF domains. In terms of processing, predominantly O-glucosylated at Ser-92 by POGLUT1 in vitro.

The protein localises to the secreted. It carries out the reaction Selective cleavage of Arg-|-Ile bond in factor X to form factor Xa.. Functionally, factor IX is a vitamin K-dependent plasma protein that participates in the intrinsic pathway of blood coagulation by converting factor X to its active form in the presence of Ca(2+) ions, phospholipids, and factor VIIIa. This chain is Coagulation factor IX (F9), found in Rattus norvegicus (Rat).